Reading from the N-terminus, the 477-residue chain is Aspartyl/glutamyl-tRNA(Asn/Gln) amidotransferase subunit B (477 aa).

This sequence belongs to the GatB/GatE family. GatB subfamily. In terms of assembly, heterotrimer of A, B and C subunits.

The catalysed reaction is L-glutamyl-tRNA(Gln) + L-glutamine + ATP + H2O = L-glutaminyl-tRNA(Gln) + L-glutamate + ADP + phosphate + H(+). It carries out the reaction L-aspartyl-tRNA(Asn) + L-glutamine + ATP + H2O = L-asparaginyl-tRNA(Asn) + L-glutamate + ADP + phosphate + 2 H(+). In terms of biological role, allows the formation of correctly charged Asn-tRNA(Asn) or Gln-tRNA(Gln) through the transamidation of misacylated Asp-tRNA(Asn) or Glu-tRNA(Gln) in organisms which lack either or both of asparaginyl-tRNA or glutaminyl-tRNA synthetases. The reaction takes place in the presence of glutamine and ATP through an activated phospho-Asp-tRNA(Asn) or phospho-Glu-tRNA(Gln). The protein is Aspartyl/glutamyl-tRNA(Asn/Gln) amidotransferase subunit B of Coxiella burnetii (strain RSA 493 / Nine Mile phase I).